We begin with the raw amino-acid sequence, 414 residues long: 3-oxoacyl-[acyl-carrier-protein] synthase 2 (414 aa).

The Ketosynthase family 3 (KS3) domain occupies 4-411 (NKRVVITGMG…GHNAVLVFKK (408 aa)). Residues Cys-165, His-304, and His-341 each act as for beta-ketoacyl synthase activity in the active site.

Belongs to the thiolase-like superfamily. Beta-ketoacyl-ACP synthases family.

The enzyme catalyses a fatty acyl-[ACP] + malonyl-[ACP] + H(+) = a 3-oxoacyl-[ACP] + holo-[ACP] + CO2. The catalysed reaction is (9Z)-hexadecenoyl-[ACP] + malonyl-[ACP] + H(+) = 3-oxo-(11Z)-octadecenoyl-[ACP] + holo-[ACP] + CO2. It participates in lipid metabolism; fatty acid biosynthesis. Its function is as follows. Involved in the type II fatty acid elongation cycle. Catalyzes the elongation of a wide range of acyl-ACP by the addition of two carbons from malonyl-ACP to an acyl acceptor. Can efficiently catalyze the conversion of palmitoleoyl-ACP (cis-hexadec-9-enoyl-ACP) to cis-vaccenoyl-ACP (cis-octadec-11-enoyl-ACP), an essential step in the thermal regulation of fatty acid composition. The chain is 3-oxoacyl-[acyl-carrier-protein] synthase 2 (fabF) from Staphylococcus aureus (strain MW2).